The sequence spans 156 residues: ATP synthase subunit b (156 aa).

A helical membrane pass occupies residues Leu-7–Pro-27.

This sequence belongs to the ATPase B chain family. In terms of assembly, F-type ATPases have 2 components, F(1) - the catalytic core - and F(0) - the membrane proton channel. F(1) has five subunits: alpha(3), beta(3), gamma(1), delta(1), epsilon(1). F(0) has three main subunits: a(1), b(2) and c(10-14). The alpha and beta chains form an alternating ring which encloses part of the gamma chain. F(1) is attached to F(0) by a central stalk formed by the gamma and epsilon chains, while a peripheral stalk is formed by the delta and b chains.

Its subcellular location is the cell inner membrane. Functionally, f(1)F(0) ATP synthase produces ATP from ADP in the presence of a proton or sodium gradient. F-type ATPases consist of two structural domains, F(1) containing the extramembraneous catalytic core and F(0) containing the membrane proton channel, linked together by a central stalk and a peripheral stalk. During catalysis, ATP synthesis in the catalytic domain of F(1) is coupled via a rotary mechanism of the central stalk subunits to proton translocation. In terms of biological role, component of the F(0) channel, it forms part of the peripheral stalk, linking F(1) to F(0). This Acidovorax sp. (strain JS42) protein is ATP synthase subunit b.